The primary structure comprises 135 residues: Alpha-ketoglutarate dehydrogenase subunit 4, mitochondrial (135 aa).

It belongs to the alpha-ketoglutarate dehydrogenase component 4 family. As to quaternary structure, component of the 2-oxoglutarate dehydrogenase complex (OGDC), also called alpha-ketoglutarate dehydrogenase (KGDH) complex. The copmplex is composed of the catalytic subunits OGDH (2-oxoglutarate dehydrogenase; also called E1 subunit), DLST (dihydrolipoamide succinyltransferase; also called E2 subunit) and DLD (dihydrolipoamide dehydrogenase; also called E3 subunit), and the assembly factor KGD4. Within OGDC, interacts (via N-terminus) with E3 subunit and (via C-terminus) with the complex core formed by E1 and E2 subunits.

It localises to the mitochondrion. Its function is as follows. Molecular adapter that is necessary to a form a stable 2-oxoglutarate dehydrogenase enzyme complex (OGDC). Required for incorporation of the E3 subunit into the E1-E2 core of mitochondrial OGDC, and acting as a stability factor for the fully assembled complex. The protein is Alpha-ketoglutarate dehydrogenase subunit 4, mitochondrial (KGD4) of Chaetomium thermophilum (strain DSM 1495 / CBS 144.50 / IMI 039719) (Thermochaetoides thermophila).